The sequence spans 450 residues: Folate synthesis bifunctional protein (450 aa).

The HPPK stretch occupies residues 1–166; that stretch reads MTTWNFVCLG…TFAELAAIYP (166 aa). The Pterin-binding domain maps to 180-441; the sequence is TQIMGIVNVT…QVEGNRRVLA (262 aa). Residues 182 to 450 are DHPS; it reads IMGIVNVTDD…AAAAWSGMPV (269 aa). Asparagine 187 contacts Mg(2+). (7,8-dihydropterin-6-yl)methyl diphosphate is bound by residues threonine 227, aspartate 267, asparagine 287, aspartate 358, lysine 395, and 429-431; that span reads RVH.

This sequence in the C-terminal section; belongs to the DHPS family. It in the N-terminal section; belongs to the HPPK family. The cofactor is Mg(2+).

The catalysed reaction is 6-hydroxymethyl-7,8-dihydropterin + ATP = (7,8-dihydropterin-6-yl)methyl diphosphate + AMP + H(+). It carries out the reaction (7,8-dihydropterin-6-yl)methyl diphosphate + 4-aminobenzoate = 7,8-dihydropteroate + diphosphate. It participates in cofactor biosynthesis; tetrahydrofolate biosynthesis; 2-amino-4-hydroxy-6-hydroxymethyl-7,8-dihydropteridine diphosphate from 7,8-dihydroneopterin triphosphate: step 4/4. Its pathway is cofactor biosynthesis; tetrahydrofolate biosynthesis; 7,8-dihydrofolate from 2-amino-4-hydroxy-6-hydroxymethyl-7,8-dihydropteridine diphosphate and 4-aminobenzoate: step 1/2. The polypeptide is Folate synthesis bifunctional protein (folKP) (Chlamydia muridarum (strain MoPn / Nigg)).